Consider the following 169-residue polypeptide: S-ribosylhomocysteine lyase (169 aa).

Residues His54, His58, and Cys128 each coordinate Fe cation.

It belongs to the LuxS family. Homodimer. It depends on Fe cation as a cofactor.

The enzyme catalyses S-(5-deoxy-D-ribos-5-yl)-L-homocysteine = (S)-4,5-dihydroxypentane-2,3-dione + L-homocysteine. Functionally, involved in the synthesis of autoinducer 2 (AI-2) which is secreted by bacteria and is used to communicate both the cell density and the metabolic potential of the environment. The regulation of gene expression in response to changes in cell density is called quorum sensing. Catalyzes the transformation of S-ribosylhomocysteine (RHC) to homocysteine (HC) and 4,5-dihydroxy-2,3-pentadione (DPD). In Shewanella amazonensis (strain ATCC BAA-1098 / SB2B), this protein is S-ribosylhomocysteine lyase.